Consider the following 183-residue polypeptide: Protein P7 (183 aa).

The protein resides in the host nucleus. Functionally, may play a role in inhibition of the host immune system by counteracting the type I interferon response. This chain is Protein P7, found in Gadus morhua (Atlantic cod).